A 488-amino-acid polypeptide reads, in one-letter code: UDP-N-acetylmuramoyl-L-alanyl-D-glutamate--2,6-diaminopimelate ligase (488 aa).

S29 provides a ligand contact to UDP-N-acetyl-alpha-D-muramoyl-L-alanyl-D-glutamate. Position 108–114 (108–114 (GTSGKTS)) interacts with ATP. Residues 150–151 (TT), S177, Q183, and R185 contribute to the UDP-N-acetyl-alpha-D-muramoyl-L-alanyl-D-glutamate site. An N6-carboxylysine modification is found at K217. Meso-2,6-diaminopimelate contacts are provided by residues R381, 405-408 (DNPR), G453, and E457. The Meso-diaminopimelate recognition motif motif lies at 405 to 408 (DNPR).

This sequence belongs to the MurCDEF family. MurE subfamily. Mg(2+) serves as cofactor. Post-translationally, carboxylation is probably crucial for Mg(2+) binding and, consequently, for the gamma-phosphate positioning of ATP.

The protein resides in the cytoplasm. It carries out the reaction UDP-N-acetyl-alpha-D-muramoyl-L-alanyl-D-glutamate + meso-2,6-diaminopimelate + ATP = UDP-N-acetyl-alpha-D-muramoyl-L-alanyl-gamma-D-glutamyl-meso-2,6-diaminopimelate + ADP + phosphate + H(+). The protein operates within cell wall biogenesis; peptidoglycan biosynthesis. Its function is as follows. Catalyzes the addition of meso-diaminopimelic acid to the nucleotide precursor UDP-N-acetylmuramoyl-L-alanyl-D-glutamate (UMAG) in the biosynthesis of bacterial cell-wall peptidoglycan. This is UDP-N-acetylmuramoyl-L-alanyl-D-glutamate--2,6-diaminopimelate ligase from Brucella melitensis biotype 1 (strain ATCC 23456 / CCUG 17765 / NCTC 10094 / 16M).